A 355-amino-acid chain; its full sequence is Probable dual-specificity RNA methyltransferase RlmN (355 aa).

E89 acts as the Proton acceptor in catalysis. The Radical SAM core domain occupies 95-322 (YENRKTVCLS…KRLGVPTSIR (228 aa)). A disulfide bridge links C102 with C333. [4Fe-4S] cluster contacts are provided by C109, C113, and C116. S-adenosyl-L-methionine-binding positions include 159–160 (GE), S191, 214–216 (SLH), and N290. C333 functions as the S-methylcysteine intermediate in the catalytic mechanism.

The protein belongs to the radical SAM superfamily. RlmN family. [4Fe-4S] cluster serves as cofactor.

The protein localises to the cytoplasm. It carries out the reaction adenosine(2503) in 23S rRNA + 2 reduced [2Fe-2S]-[ferredoxin] + 2 S-adenosyl-L-methionine = 2-methyladenosine(2503) in 23S rRNA + 5'-deoxyadenosine + L-methionine + 2 oxidized [2Fe-2S]-[ferredoxin] + S-adenosyl-L-homocysteine. The enzyme catalyses adenosine(37) in tRNA + 2 reduced [2Fe-2S]-[ferredoxin] + 2 S-adenosyl-L-methionine = 2-methyladenosine(37) in tRNA + 5'-deoxyadenosine + L-methionine + 2 oxidized [2Fe-2S]-[ferredoxin] + S-adenosyl-L-homocysteine. In terms of biological role, specifically methylates position 2 of adenine 2503 in 23S rRNA and position 2 of adenine 37 in tRNAs. The protein is Probable dual-specificity RNA methyltransferase RlmN of Thermus thermophilus (strain ATCC BAA-163 / DSM 7039 / HB27).